A 2555-amino-acid polypeptide reads, in one-letter code: Squalestatin hexaketide synthase clz14 (2555 aa).

A disordered region spans residues 1–84; it reads MDVSKEAGHH…PNATSTTTTT (84 aa). Residues 10–84 show a composition bias toward low complexity; it reads HANGFANGNT…PNATSTTTTT (75 aa). In terms of domain architecture, Ketosynthase family 3 (KS3) spans 91–511; the sequence is QVPVAICGIG…GSNTHIIIDS (421 aa). Catalysis depends on for beta-ketoacyl synthase activity residues cysteine 261, histidine 398, and histidine 435. The tract at residues 611–928 is malonyl-CoA:ACP transacylase (MAT) domain; sequence FIFTGQGAQW…LEGIGKLFCF (318 aa). An N-terminal hotdog fold region spans residues 975 to 1104; that stretch reads HELLGERSLE…GLVTASVVTS (130 aa). The dehydratase (DH) domain stretch occupies residues 975 to 1256; it reads HELLGERSLE…RGFKCKKTDD (282 aa). A PKS/mFAS DH domain is found at 975 to 1260; it reads HELLGERSLE…CKKTDDAFIQ (286 aa). Histidine 1007 acts as the Proton acceptor; for dehydratase activity in catalysis. A C-terminal hotdog fold region spans residues 1117 to 1260; the sequence is SRKVDTSRWY…CKKTDDAFIQ (144 aa). The active-site Proton donor; for dehydratase activity is aspartate 1177. The tract at residues 1424–1595 is methyltransferase (CMet) domain; sequence SFFQAAGLNK…GFEGAGTVVL (172 aa). Residues 1821-2141 are enoyl reductase (ER) (ER) domain; that stretch reads GMLNTLHWVG…RGVHMGRIVV (321 aa). Residues 2165-2338 form a ketoreductase (KR) domain region; it reads STYLLTGGMG…PASVIDIAAI (174 aa). One can recognise a Carrier domain in the interval 2468–2546; the sequence is IIFAQEIAKR…SLGRLATKRL (79 aa). Serine 2505 is modified (O-(pantetheine 4'-phosphoryl)serine).

It participates in secondary metabolite biosynthesis. In terms of biological role, highly reducing polyketide synthase (HR-PKS); part of the gene cluster that mediates the biosynthesis of squalestatin S1 (SQS1, also known as zaragozic acid A), a heavily oxidized fungal polyketide that offers potent cholesterol lowering activity by targeting squalene synthase (SS). SQS1 is composed of a 2,8-dioxobicyclic[3.2.1]octane-3,4,5-tricarboxyclic acid core that is connected to two lipophilic polyketide arms. These initial steps feature the priming of an unusual benzoic acid starter unit onto the highly reducing polyketide synthase clz14, followed by oxaloacetate extension and product release to generate a tricarboxylic acid containing product. The phenylalanine ammonia lyase (PAL) clz10 and the acyl-CoA ligase clz12 are involved in transforming phenylalanine into benzoyl-CoA. The citrate synthase-like protein clz17 is involved in connecting the C-alpha-carbons of the hexaketide chain and oxaloacetate to afford the tricarboxylic acid unit. The potential hydrolytic enzymes, clz11 and clz13, are in close proximity to pks2 and may participate in product release. On the other side, the tetraketide arm is synthesized by a the squalestatin tetraketide synthase clz2 and enzymatically esterified to the core in the last biosynthetic step, by the acetyltransferase clz6. The biosynthesis of the tetraketide must involve 3 rounds of chain extension. After the first and second rounds methyl-transfer occurs, and in all rounds of extension the ketoreductase and dehydratase are active. The enoyl reductase and C-MeT of clz2 are not active in the final round of extension. The acetyltransferase clz6 appears to have a broad substrate selectivity for its acyl CoA substrate, allowing the in vitro synthesis of novel squalestatins. The biosynthesis of SQS1 requires several oxidative steps likely performed by oxidoreductases clz3, clz15 and clz16. Finally, in support of the identification of the cluster as being responsible for SQS1 production, the cluster contains a gene encoding a putative squalene synthase (SS) clz20, suggesting a likely mechanism for self-resistance. The sequence is that of Squalestatin hexaketide synthase clz14 from Cochliobolus lunatus (Filamentous fungus).